We begin with the raw amino-acid sequence, 117 residues long: Large ribosomal subunit protein uL18 (117 aa).

Belongs to the universal ribosomal protein uL18 family. In terms of assembly, part of the 50S ribosomal subunit; part of the 5S rRNA/L5/L18/L25 subcomplex. Contacts the 5S and 23S rRNAs.

Functionally, this is one of the proteins that bind and probably mediate the attachment of the 5S RNA into the large ribosomal subunit, where it forms part of the central protuberance. This Photobacterium profundum (strain SS9) protein is Large ribosomal subunit protein uL18.